Reading from the N-terminus, the 82-residue chain is Vejovine (82 aa).

The first 22 residues, 1–22, serve as a signal peptide directing secretion; that stretch reads MNAKTLFVVFLIGMLVTEQVEA. Positions 70 to 82 are excised as a propeptide; it reads MTLDEIVDAMYYD.

It belongs to the non-disulfide-bridged peptide (NDBP) superfamily. Long chain multifunctional peptide (group 2) family. In terms of tissue distribution, expressed by the venom gland.

The protein resides in the secreted. Its subcellular location is the target cell membrane. Functionally, displays significant potent antimicrobial activity against clinical isolates of Gram-negative multidrug resistant strains of E.coli, P.aeruginosa and A.baumanii with MIC values as low as 4.4 uM. Additionally, it displays low cytolytic and hemolytic activity against human erythrocytes reaching 50% hemolysis at 100 uM. The protein is Vejovine of Vaejovis mexicanus (Mexican scorpion).